We begin with the raw amino-acid sequence, 721 residues long: 1,4-alpha-glucan branching enzyme GlgB (721 aa).

D400 serves as the catalytic Nucleophile. The Proton donor role is filled by E453.

The protein belongs to the glycosyl hydrolase 13 family. GlgB subfamily. In terms of assembly, monomer.

It carries out the reaction Transfers a segment of a (1-&gt;4)-alpha-D-glucan chain to a primary hydroxy group in a similar glucan chain.. The protein operates within glycan biosynthesis; glycogen biosynthesis. Functionally, catalyzes the formation of the alpha-1,6-glucosidic linkages in glycogen by scission of a 1,4-alpha-linked oligosaccharide from growing alpha-1,4-glucan chains and the subsequent attachment of the oligosaccharide to the alpha-1,6 position. The protein is 1,4-alpha-glucan branching enzyme GlgB of Chlamydia abortus (strain DSM 27085 / S26/3) (Chlamydophila abortus).